The following is a 471-amino-acid chain: GDP-fucose protein O-fucosyltransferase 3 (471 aa).

Over 1–8 (MNRMWEKK) the chain is Cytoplasmic. The chain crosses the membrane as a helical; Signal-anchor for type II membrane protein span at residues 9-29 (FWISCFFIILFFILVTLQVMV). The Lumenal segment spans residues 30 to 471 (ELGRFEKRET…EFWNLVFKFQ (442 aa)). 4 N-linked (GlcNAc...) asparagine glycosylation sites follow: N102, N122, N160, and N310. An intrachain disulfide couples C381 to C384. N-linked (GlcNAc...) asparagine glycosylation occurs at N457.

Belongs to the glycosyltransferase 10 family.

It is found in the endoplasmic reticulum membrane. The catalysed reaction is L-threonyl-[protein] + GDP-beta-L-fucose = 3-O-(alpha-L-fucosyl)-L-threonyl-[protein] + GDP + H(+). It catalyses the reaction L-seryl-[protein] + GDP-beta-L-fucose = 3-O-(alpha-L-fucosyl)-L-seryl-[protein] + GDP + H(+). The protein operates within protein modification; protein glycosylation. Its function is as follows. Protein O-fucosyltransferase that specifically catalyzes O-fucosylation of serine or threonine residues in EMI domains of target proteins. Attaches fucose through an O-glycosidic linkage. O-fucosylation of EMI domain-containing proteins may be required for facilitating protein folding and secretion. The polypeptide is GDP-fucose protein O-fucosyltransferase 3 (fut10) (Xenopus tropicalis (Western clawed frog)).